The sequence spans 112 residues: T cell receptor alpha variable 9-1 (112 aa).

The signal sequence occupies residues 1 to 20 (MNSSPGPAIALFLMFGGING). The Ig-like domain occupies 21-112 (DSVVQTEGQV…DSAVYFCALS (92 aa)). A glycan (N-linked (GlcNAc...) asparagine) is linked at N41. An intrachain disulfide couples C42 to C109.

In terms of assembly, alpha-beta TR is a heterodimer composed of an alpha and beta chain; disulfide-linked. The alpha-beta TR is associated with the transmembrane signaling CD3 coreceptor proteins to form the TR-CD3 (TcR or TCR). The assembly of alpha-beta TR heterodimers with CD3 occurs in the endoplasmic reticulum where a single alpha-beta TR heterodimer associates with one CD3D-CD3E heterodimer, one CD3G-CD3E heterodimer and one CD247 homodimer forming a stable octameric structure. CD3D-CD3E and CD3G-CD3E heterodimers preferentially associate with TR alpha and TR beta chains, respectively. The association of the CD247 homodimer is the last step of TcR assembly in the endoplasmic reticulum and is required for transport to the cell surface.

It is found in the cell membrane. Its function is as follows. V region of the variable domain of T cell receptor (TR) alpha chain that participates in the antigen recognition. Alpha-beta T cell receptors are antigen specific receptors which are essential to the immune response and are present on the cell surface of T lymphocytes. Recognize peptide-major histocompatibility (MH) (pMH) complexes that are displayed by antigen presenting cells (APC), a prerequisite for efficient T cell adaptive immunity against pathogens. Binding of alpha-beta TR to pMH complex initiates TR-CD3 clustering on the cell surface and intracellular activation of LCK that phosphorylates the ITAM motifs of CD3G, CD3D, CD3E and CD247 enabling the recruitment of ZAP70. In turn ZAP70 phosphorylates LAT, which recruits numerous signaling molecules to form the LAT signalosome. The LAT signalosome propagates signal branching to three major signaling pathways, the calcium, the mitogen-activated protein kinase (MAPK) kinase and the nuclear factor NF-kappa-B (NF-kB) pathways, leading to the mobilization of transcription factors that are critical for gene expression and essential for T cell growth and differentiation. The T cell repertoire is generated in the thymus, by V-(D)-J rearrangement. This repertoire is then shaped by intrathymic selection events to generate a peripheral T cell pool of self-MH restricted, non-autoaggressive T cells. Post-thymic interaction of alpha-beta TR with the pMH complexes shapes TR structural and functional avidity. The sequence is that of T cell receptor alpha variable 9-1 from Homo sapiens (Human).